We begin with the raw amino-acid sequence, 96 residues long: MEQAPEDQGPPREPYQEWALETLEELKNEAVRHFPRPWLHQLGQFIYDTYGDTWVGVEAIIRILQHLLFIHFRLGCQHSRIGILPQRRRSNGSNRS.

The homooligomerization stretch occupies residues 1–42 (MEQAPEDQGPPREPYQEWALETLEELKNEAVRHFPRPWLHQL). Phosphoserine; by host occurs at positions 79 and 96.

The protein belongs to the HIV-1 VPR protein family. In terms of assembly, homooligomer, may form homodimer. Interacts with p6-gag region of the Pr55 Gag precursor protein through a (Leu-X-X)4 motif near the C-terminus of the P6gag protein. Interacts with host UNG. May interact with host RAD23A/HHR23A. Interacts with host VPRBP/DCAF1, leading to hijack the CUL4A-RBX1-DDB1-DCAF1/VPRBP complex, mediating ubiquitination of host proteins such as TERT and ZGPAT and arrest of the cell cycle in G2 phase. In terms of processing, phosphorylated on several residues by host. These phosphorylations regulate VPR activity for the nuclear import of the HIV-1 pre-integration complex.

The protein localises to the virion. The protein resides in the host nucleus. Its subcellular location is the host extracellular space. In terms of biological role, during virus replication, may deplete host UNG protein, and incude G2-M cell cycle arrest. Acts by targeting specific host proteins for degradation by the 26S proteasome, through association with the cellular CUL4A-DDB1 E3 ligase complex by direct interaction with host VPRPB/DCAF-1. Cell cycle arrest reportedly occurs within hours of infection and is not blocked by antiviral agents, suggesting that it is initiated by the VPR carried into the virion. Additionally, VPR induces apoptosis in a cell cycle dependent manner suggesting that these two effects are mechanistically linked. Detected in the serum and cerebrospinal fluid of AIDS patient, VPR may also induce cell death to bystander cells. Functionally, during virus entry, plays a role in the transport of the viral pre-integration (PIC) complex to the host nucleus. This function is crucial for viral infection of non-dividing macrophages. May act directly at the nuclear pore complex, by binding nucleoporins phenylalanine-glycine (FG)-repeat regions. This is Protein Vpr from Pan (chimpanzees).